We begin with the raw amino-acid sequence, 328 residues long: GTP 3',8-cyclase (328 aa).

A Radical SAM core domain is found at 1 to 229 (MNQVDYLRIS…DAQVRGSGPA (229 aa)). Arg8 provides a ligand contact to GTP. [4Fe-4S] cluster contacts are provided by Cys15 and Cys19. Position 21 (Tyr21) interacts with S-adenosyl-L-methionine. A [4Fe-4S] cluster-binding site is contributed by Cys22. Arg60 is a binding site for GTP. Position 64 (Gly64) interacts with S-adenosyl-L-methionine. A GTP-binding site is contributed by Thr91. Residue Ser115 coordinates S-adenosyl-L-methionine. Lys155 lines the GTP pocket. Residue Met189 coordinates S-adenosyl-L-methionine. 2 residues coordinate [4Fe-4S] cluster: Cys252 and Cys255. Position 257-259 (257-259 (RMR)) interacts with GTP. Position 269 (Cys269) interacts with [4Fe-4S] cluster.

Belongs to the radical SAM superfamily. MoaA family. Monomer and homodimer. The cofactor is [4Fe-4S] cluster.

It carries out the reaction GTP + AH2 + S-adenosyl-L-methionine = (8S)-3',8-cyclo-7,8-dihydroguanosine 5'-triphosphate + 5'-deoxyadenosine + L-methionine + A + H(+). It participates in cofactor biosynthesis; molybdopterin biosynthesis. Its function is as follows. Catalyzes the cyclization of GTP to (8S)-3',8-cyclo-7,8-dihydroguanosine 5'-triphosphate. The polypeptide is GTP 3',8-cyclase (Trichormus variabilis (strain ATCC 29413 / PCC 7937) (Anabaena variabilis)).